Consider the following 228-residue polypeptide: Protein Iojap, chloroplastic (228 aa).

A disordered region spans residues 1-54 (MGGTSAAVPSHGLACAPPAAVTLNPRARRRRASSGSGGHRSSPQQPLRSDLLPP). A chloroplast-targeting transit peptide spans 1–62 (MGGTSAAVPS…PPATVACRAR (62 aa)).

The protein belongs to the Iojap/RsfS family. As to quaternary structure, interacts with chloroplast ribosomal protein uL14c (rpl14).

The protein localises to the plastid. It is found in the chloroplast. Functionally, may be a ribosome silencing factor (Potential). Involved in plastid biogenesis. Plastids affected by a mutation in Iojap lose the ability to perform translation and lack plastid ribosomes. The protein is Protein Iojap, chloroplastic (Ij) of Zea mays (Maize).